The sequence spans 63 residues: Large ribosomal subunit protein uL29 (63 aa).

Belongs to the universal ribosomal protein uL29 family.

This chain is Large ribosomal subunit protein uL29, found in Stutzerimonas stutzeri (strain A1501) (Pseudomonas stutzeri).